A 656-amino-acid polypeptide reads, in one-letter code: Chromosomal replication initiator protein DnaA (656 aa).

Residues 1-100 (MADVPADLAA…TAGEPAGPAP (100 aa)) form a domain I, interacts with DnaA modulators region. The segment at 91–313 (TAGEPAGPAP…PAPATGPGEP (223 aa)) is disordered. The segment covering 97 to 109 (GPAPQAPQSPPSR) has biased composition (pro residues). Positions 101-315 (QAPQSPPSRP…PATGPGEPTA (215 aa)) are domain II. 2 stretches are compositionally biased toward basic and acidic residues: residues 126–144 (GREE…RNRA) and 231–273 (QRGD…RDLP). Residues 291–313 (GPATGAPGPLAAQPAPATGPGEP) show a composition bias toward low complexity. The domain III, AAA+ region stretch occupies residues 316-532 (RLNPKYLFDT…GALIRVTAFA (217 aa)). ATP-binding residues include Gly-360, Gly-362, Lys-363, and Thr-364. The segment at 533–656 (SLNRQPVDLG…TELTNRIKNG (124 aa)) is domain IV, binds dsDNA.

It belongs to the DnaA family. As to quaternary structure, oligomerizes as a right-handed, spiral filament on DNA at oriC.

The protein resides in the cytoplasm. Its function is as follows. Plays an essential role in the initiation and regulation of chromosomal replication. ATP-DnaA binds to the origin of replication (oriC) to initiate formation of the DNA replication initiation complex once per cell cycle. Binds the DnaA box (a 9 base pair repeat at the origin) and separates the double-stranded (ds)DNA. Forms a right-handed helical filament on oriC DNA; dsDNA binds to the exterior of the filament while single-stranded (ss)DNA is stabiized in the filament's interior. The ATP-DnaA-oriC complex binds and stabilizes one strand of the AT-rich DNA unwinding element (DUE), permitting loading of DNA polymerase. After initiation quickly degrades to an ADP-DnaA complex that is not apt for DNA replication. Binds acidic phospholipids. The polypeptide is Chromosomal replication initiator protein DnaA (Streptomyces coelicolor (strain ATCC BAA-471 / A3(2) / M145)).